A 319-amino-acid chain; its full sequence is Movement protein (319 aa).

Positions 1–20 (MNSSVEKQNSEIPEKENEEF) are disordered. Residues 289 to 319 (KETSPSSSHQKSLEEISDKIDTLVVKLNNIS) are a coiled coil.

The protein belongs to the caulimoviridae movement protein family. Homotrimer, through the coiled-coil domain. Interacts with VAP.

It localises to the host cell junction. The protein resides in the host plasmodesma. Its function is as follows. Transports viral genome to neighboring plant cells directly through plasmosdesmata, without any budding. The movement protein allows efficient cell to cell propagation, by bypassing the host cell wall barrier. Acts by forming tubules structures that increase the size exclusion limit (SEL) of plasmodesmata, thereby allowing viral ribonucleocapsids to spread directly to neighboring cells. The protein is Movement protein of Dianthus caryophyllus (Carnation).